The following is a 261-amino-acid chain: Triosephosphate isomerase (261 aa).

Substrate is bound at residue 10–12 (NWK). H100 serves as the catalytic Electrophile. Catalysis depends on E172, which acts as the Proton acceptor. Residues G178, S218, and 239-240 (GG) each bind substrate.

It belongs to the triosephosphate isomerase family. Homodimer.

The protein resides in the cytoplasm. It catalyses the reaction D-glyceraldehyde 3-phosphate = dihydroxyacetone phosphate. Its pathway is carbohydrate biosynthesis; gluconeogenesis. The protein operates within carbohydrate degradation; glycolysis; D-glyceraldehyde 3-phosphate from glycerone phosphate: step 1/1. Its function is as follows. Involved in the gluconeogenesis. Catalyzes stereospecifically the conversion of dihydroxyacetone phosphate (DHAP) to D-glyceraldehyde-3-phosphate (G3P). The protein is Triosephosphate isomerase of Mycobacteroides abscessus (strain ATCC 19977 / DSM 44196 / CCUG 20993 / CIP 104536 / JCM 13569 / NCTC 13031 / TMC 1543 / L948) (Mycobacterium abscessus).